Here is a 253-residue protein sequence, read N- to C-terminus: Dehydration-responsive element-binding protein 1D (253 aa).

The segment covering M1–S22 has biased composition (polar residues). Residues M1–K31 form a disordered region. Positions V39–A98 form a DNA-binding region, AP2/ERF. The segment at R131–S153 is disordered. The segment covering P134–S153 has biased composition (low complexity).

Belongs to the AP2/ERF transcription factor family. ERF subfamily.

Its subcellular location is the nucleus. In terms of biological role, transcriptional activator that binds specifically to the DNA sequence 5'-[AG]CCGAC-3'. Binding to the C-repeat/DRE element mediates high salinity- and dehydration-inducible transcription. This chain is Dehydration-responsive element-binding protein 1D (DREB1D), found in Oryza sativa subsp. indica (Rice).